The following is a 142-amino-acid chain: Hemoglobin subunit alpha (142 aa).

The 141-residue stretch at 2 to 142 folds into the Globin domain; that stretch reads VLSSQNKKAI…VAYELSSCYR (141 aa). His-60 contacts O2. His-89 contacts heme b.

Belongs to the globin family. Heterotetramer of two alpha chains and two beta chains. In terms of tissue distribution, red blood cells.

Involved in oxygen transport from gills to the various peripheral tissues. This Hemitrygon akajei (Red stingray) protein is Hemoglobin subunit alpha (hba).